The following is a 512-amino-acid chain: UDP-N-acetylmuramoyl-L-alanyl-D-glutamate--2,6-diaminopimelate ligase (512 aa).

Residue serine 32 coordinates UDP-N-acetyl-alpha-D-muramoyl-L-alanyl-D-glutamate. 114–120 (GTNGKTT) contacts ATP. UDP-N-acetyl-alpha-D-muramoyl-L-alanyl-D-glutamate contacts are provided by residues 156 to 157 (TT), serine 183, and arginine 191. The residue at position 223 (lysine 223) is an N6-carboxylysine. Residues arginine 395, 419–422 (DNPR), glycine 469, and glutamate 473 contribute to the meso-2,6-diaminopimelate site. Residues 419-422 (DNPR) carry the Meso-diaminopimelate recognition motif motif.

Belongs to the MurCDEF family. MurE subfamily. The cofactor is Mg(2+). Carboxylation is probably crucial for Mg(2+) binding and, consequently, for the gamma-phosphate positioning of ATP.

The protein resides in the cytoplasm. The catalysed reaction is UDP-N-acetyl-alpha-D-muramoyl-L-alanyl-D-glutamate + meso-2,6-diaminopimelate + ATP = UDP-N-acetyl-alpha-D-muramoyl-L-alanyl-gamma-D-glutamyl-meso-2,6-diaminopimelate + ADP + phosphate + H(+). It functions in the pathway cell wall biogenesis; peptidoglycan biosynthesis. Catalyzes the addition of meso-diaminopimelic acid to the nucleotide precursor UDP-N-acetylmuramoyl-L-alanyl-D-glutamate (UMAG) in the biosynthesis of bacterial cell-wall peptidoglycan. This Chlorobium phaeobacteroides (strain DSM 266 / SMG 266 / 2430) protein is UDP-N-acetylmuramoyl-L-alanyl-D-glutamate--2,6-diaminopimelate ligase.